The chain runs to 490 residues: RNA-binding post-transcriptional regulator cip1 (490 aa).

Disordered stretches follow at residues 16 to 63 (RGLA…GSSA), 76 to 97 (ASSRAASPAPSDSFPTFGYSQL), and 138 to 199 (HNVS…GEDT). The span at 34-62 (RLQSPLNSPKLQPIGSPQASRKTSGSGSS) shows a compositional bias: polar residues. Phosphoserine is present on residues serine 37, serine 41, serine 49, serine 86, and serine 141. 2 stretches are compositionally biased toward low complexity: residues 76-88 (ASSRAASPAPSDS) and 141-160 (SPPSGAESSSESKSFSASGK). Over residues 164 to 192 (ADTSAEPSLDAFNSTQIKAGSTANSNSTP) the composition is skewed to polar residues. The 79-residue stretch at 202 to 280 (TAIVVKNIPF…RRLRVEWKRQ (79 aa)) folds into the RRM domain. Serine 397, serine 401, and serine 427 each carry phosphoserine. Threonine 431 is modified (phosphothreonine). 3 positions are modified to phosphoserine: serine 435, serine 456, and serine 466. Residues 457-490 (PLQKASTLSSPFNSKNDNDASTSASKQSFGVSHF) are disordered.

Interacts with csx1. Phosphorylated by sty1.

The protein localises to the cytoplasm. Functionally, regulates global gene expression after oxidative stress. Interacts and stabilizes mRNAs and may regulate their transition between different cytoplasmic components after oxidative stress. This is RNA-binding post-transcriptional regulator cip1 (cip1) from Schizosaccharomyces pombe (strain 972 / ATCC 24843) (Fission yeast).